Consider the following 357-residue polypeptide: MRLETIRQSMRATGAKDCHIDRVLRAWTQAKPLESGARRHQPENFLPQALRTALPALQEELSALARVRSEHPGEDGSSRLLVELADGQTVESVLLPRDGLCISTQIGCAVGCTFCMTGRDGLLRQVSSAEMVAQVVLGRGRRKVTRVVFMGMGEPSHNMDNVLEAIDTLGTYGGIGHKNLVFSTVGDRRVFDRLPQQRVVPALALSLHSTRAELRAELLPKAPHIDPTELVELAEHYARTTGYPIQYQWTLIDGINDSIEEMDGIVRLLTGKYAIMNLIPYNATATLDYRRPSLEHITTLTKYLHAKGIRTTVRNSAGQDVDGGCGQLRARTLDAGTATDAQKISLKHLKTGTRSAA.

Catalysis depends on Glu-91, which acts as the Proton acceptor. In terms of domain architecture, Radical SAM core spans 94-320; sequence LLPRDGLCIS…TTVRNSAGQD (227 aa). A disulfide bridge links Cys-101 with Cys-325. Positions 108, 112, and 115 each coordinate [4Fe-4S] cluster. Residues 153–154, Ser-183, 206–208, and Asn-282 contribute to the S-adenosyl-L-methionine site; these read GE and SLH. Catalysis depends on Cys-325, which acts as the S-methylcysteine intermediate.

Belongs to the radical SAM superfamily. RlmN family. It depends on [4Fe-4S] cluster as a cofactor.

It is found in the cytoplasm. This is Probable RNA methyltransferase Daro_1157 from Dechloromonas aromatica (strain RCB).